Consider the following 78-residue polypeptide: Small nuclear ribonucleoprotein F (78 aa).

Positions 7 to 78 constitute a Sm domain; that stretch reads NPKPFLQGLI…NVLWVGESTV (72 aa).

The protein belongs to the snRNP Sm proteins family. SmF/LSm6 subfamily. In terms of assembly, belongs to the 40S cdc5-associated complex (or cwf complex), a spliceosome sub-complex reminiscent of a late-stage spliceosome composed of the U2, U5 and U6 snRNAs and at least brr2, cdc5, cwf2/prp3, cwf3/syf1, cwf4/syf3, cwf5/ecm2, spp42/cwf6, cwf7/spf27, cwf8, cwf9, cwf10, cwf11, cwf12, prp45/cwf13, cwf14, cwf15, cwf16, cwf17, cwf18, cwf19, cwf20, cwf21, cwf22, cwf23, cwf24, cwf25, cwf26, cyp7/cwf27, cwf28, cwf29/ist3, lea1, msl1, prp5/cwf1, prp10, prp12/sap130, prp17, prp22, sap61, sap62, sap114, sap145, slu7, smb1, smd1, smd3, smf1, smg1 and syf2.

The protein localises to the nucleus. The protein resides in the cytoplasm. Plays a role in pre-mRNA splicing as a core component of the spliceosomal U1, U2, U4 and U5 small nuclear ribonucleoproteins (snRNPs), the building blocks of the spliceosome. The chain is Small nuclear ribonucleoprotein F (smf1) from Schizosaccharomyces pombe (strain 972 / ATCC 24843) (Fission yeast).